The chain runs to 198 residues: Putative protein-methionine-sulfoxide reductase subunit YedZ1 (198 aa).

4 consecutive transmembrane segments (helical) span residues 12–32 (WLRV…MSGW), 63–83 (FAAM…NIFS), 124–144 (AAYL…LVLW), and 167–187 (FIGM…VALV).

This sequence belongs to the HupC/HyaC/HydC family.

The protein resides in the cell inner membrane. Functionally, part of the YedY1-YedZ1 system that may repair oxidized proteins containing methionine sulfoxide residues (Met-O). The sequence is that of Putative protein-methionine-sulfoxide reductase subunit YedZ1 from Azospira oryzae (strain ATCC BAA-33 / DSM 13638 / PS) (Dechlorosoma suillum).